The chain runs to 221 residues: Riboflavin kinase (221 aa).

The tract at residues methionine 1–serine 92 is H-T-H motif-like. The riboflavin kinase stretch occupies residues leucine 93 to leucine 221. CDP is bound at residue glycine 102–alanine 107. 2 residues coordinate Mg(2+): threonine 131 and asparagine 133. Residues threonine 188 and glutamate 196 each coordinate FMN. Glutamate 201–arginine 204 contacts CDP.

It belongs to the archaeal riboflavin kinase family. It depends on Mg(2+) as a cofactor.

It carries out the reaction riboflavin + CTP = CDP + FMN + H(+). It functions in the pathway cofactor biosynthesis; FMN biosynthesis; FMN from riboflavin (CTP route): step 1/1. In terms of biological role, catalyzes the CTP-dependent phosphorylation of riboflavin (vitamin B2) to form flavin mononucleotide (FMN). This Methanospirillum hungatei JF-1 (strain ATCC 27890 / DSM 864 / NBRC 100397 / JF-1) protein is Riboflavin kinase (ribK).